The primary structure comprises 892 residues: Alanine--tRNA ligase (892 aa).

Zn(2+) contacts are provided by His-594, His-598, Cys-702, and His-706.

The protein belongs to the class-II aminoacyl-tRNA synthetase family. The cofactor is Zn(2+).

It is found in the cytoplasm. It catalyses the reaction tRNA(Ala) + L-alanine + ATP = L-alanyl-tRNA(Ala) + AMP + diphosphate. Catalyzes the attachment of alanine to tRNA(Ala) in a two-step reaction: alanine is first activated by ATP to form Ala-AMP and then transferred to the acceptor end of tRNA(Ala). Also edits incorrectly charged Ser-tRNA(Ala) and Gly-tRNA(Ala) via its editing domain. The polypeptide is Alanine--tRNA ligase (Pyrobaculum aerophilum (strain ATCC 51768 / DSM 7523 / JCM 9630 / CIP 104966 / NBRC 100827 / IM2)).